Here is a 321-residue protein sequence, read N- to C-terminus: Beta-ketoacyl-[acyl-carrier-protein] synthase III (321 aa).

Residues C116 and H248 contribute to the active site. The tract at residues Q249–R253 is ACP-binding. N278 is a catalytic residue.

This sequence belongs to the thiolase-like superfamily. FabH family. Homodimer.

Its subcellular location is the cytoplasm. The catalysed reaction is malonyl-[ACP] + acetyl-CoA + H(+) = 3-oxobutanoyl-[ACP] + CO2 + CoA. The protein operates within lipid metabolism; fatty acid biosynthesis. Functionally, catalyzes the condensation reaction of fatty acid synthesis by the addition to an acyl acceptor of two carbons from malonyl-ACP. Catalyzes the first condensation reaction which initiates fatty acid synthesis and may therefore play a role in governing the total rate of fatty acid production. Possesses both acetoacetyl-ACP synthase and acetyl transacylase activities. Its substrate specificity determines the biosynthesis of branched-chain and/or straight-chain of fatty acids. In Yersinia enterocolitica serotype O:8 / biotype 1B (strain NCTC 13174 / 8081), this protein is Beta-ketoacyl-[acyl-carrier-protein] synthase III.